Here is a 327-residue protein sequence, read N- to C-terminus: Interleukin-12 subunit beta (327 aa).

An N-terminal signal peptide occupies residues 1–22 (MCHQKLTISWFAVVLLASPLMA). The 84-residue stretch at 23–106 (IWELEKDVYV…LSHSRLLLHK (84 aa)) folds into the Ig-like C2-type domain. C50 and C90 are oxidised to a cystine. Residues N125, N135, N223, and N315 are each glycosylated (N-linked (GlcNAc...) asparagine). The Fibronectin type-III domain occupies 238 to 327 (PPKNLQLKPL…WSRWVSVPCS (90 aa)).

The protein belongs to the IL-12B family. In terms of assembly, heterodimer with IL12A; disulfide-linked. The heterodimer is known as interleukin IL-12. Heterodimer with IL23A; disulfide-linked. The heterodimer is known as interleukin IL-23. Also secreted as a monomer. Interacts with NBR1; this interaction promotes IL-12 secretion.

It is found in the secreted. In terms of biological role, cytokine that can act as a growth factor for activated T and NK cells, enhance the lytic activity of NK/lymphokine-activated killer cells, and stimulate the production of IFN-gamma by resting PBMC. Associates with IL23A to form the IL-23 interleukin, a heterodimeric cytokine which functions in innate and adaptive immunity. IL-23 may constitute with IL-17 an acute response to infection in peripheral tissues. IL-23 binds to a heterodimeric receptor complex composed of IL12RB1 and IL23R, activates the Jak-Stat signaling cascade, stimulates memory rather than naive T-cells and promotes production of pro-inflammatory cytokines. IL-23 induces autoimmune inflammation and thus may be responsible for autoimmune inflammatory diseases and may be important for tumorigenesis. The sequence is that of Interleukin-12 subunit beta (IL12B) from Mesocricetus auratus (Golden hamster).